The primary structure comprises 135 residues: Large ribosomal subunit protein uL18 (135 aa).

Residues 1 to 23 (MAQTQADTAARKPVGQSVSATRR) form a disordered region.

The protein belongs to the universal ribosomal protein uL18 family. As to quaternary structure, part of the 50S ribosomal subunit; part of the 5S rRNA/L5/L18/L25 subcomplex. Contacts the 5S and 23S rRNAs.

Its function is as follows. This is one of the proteins that bind and probably mediate the attachment of the 5S RNA into the large ribosomal subunit, where it forms part of the central protuberance. In Mycobacterium marinum (strain ATCC BAA-535 / M), this protein is Large ribosomal subunit protein uL18.